The following is a 1024-amino-acid chain: Beta-galactosidase (1024 aa).

Substrate is bound by residues asparagine 103 and aspartate 202. Residue aspartate 202 participates in Na(+) binding. The Mg(2+) site is built by glutamate 417, histidine 419, and glutamate 462. Substrate-binding positions include glutamate 462 and glutamate 538–histidine 541. Glutamate 462 serves as the catalytic Proton donor. The active-site Nucleophile is the glutamate 538. Asparagine 598 provides a ligand contact to Mg(2+). Phenylalanine 602 and asparagine 605 together coordinate Na(+). Substrate-binding residues include asparagine 605 and tryptophan 1000.

It belongs to the glycosyl hydrolase 2 family. As to quaternary structure, homotetramer. The cofactor is Mg(2+). Na(+) is required as a cofactor.

The catalysed reaction is Hydrolysis of terminal non-reducing beta-D-galactose residues in beta-D-galactosides.. The polypeptide is Beta-galactosidase (Shigella sonnei (strain Ss046)).